We begin with the raw amino-acid sequence, 89 residues long: Small ribosomal subunit protein uS17 (89 aa).

This sequence belongs to the universal ribosomal protein uS17 family. Part of the 30S ribosomal subunit.

Functionally, one of the primary rRNA binding proteins, it binds specifically to the 5'-end of 16S ribosomal RNA. The sequence is that of Small ribosomal subunit protein uS17 from Phytoplasma mali (strain AT).